A 185-amino-acid chain; its full sequence is Ribosome-recycling factor (185 aa).

This sequence belongs to the RRF family.

The protein resides in the cytoplasm. Functionally, responsible for the release of ribosomes from messenger RNA at the termination of protein biosynthesis. May increase the efficiency of translation by recycling ribosomes from one round of translation to another. This Vibrio vulnificus (strain YJ016) protein is Ribosome-recycling factor.